A 194-amino-acid chain; its full sequence is Xanthine phosphoribosyltransferase (194 aa).

Positions 20 and 27 each coordinate xanthine. 128-132 (ANGQA) is a binding site for 5-phospho-alpha-D-ribose 1-diphosphate. Lysine 156 provides a ligand contact to xanthine.

The protein belongs to the purine/pyrimidine phosphoribosyltransferase family. Xpt subfamily. Homodimer.

It is found in the cytoplasm. It carries out the reaction XMP + diphosphate = xanthine + 5-phospho-alpha-D-ribose 1-diphosphate. The protein operates within purine metabolism; XMP biosynthesis via salvage pathway; XMP from xanthine: step 1/1. Functionally, converts the preformed base xanthine, a product of nucleic acid breakdown, to xanthosine 5'-monophosphate (XMP), so it can be reused for RNA or DNA synthesis. The protein is Xanthine phosphoribosyltransferase of Bacillus licheniformis (strain ATCC 14580 / DSM 13 / JCM 2505 / CCUG 7422 / NBRC 12200 / NCIMB 9375 / NCTC 10341 / NRRL NRS-1264 / Gibson 46).